We begin with the raw amino-acid sequence, 69 residues long: Cytochrome c oxidase subunit 8A, mitochondrial (69 aa).

The transit peptide at 1–25 directs the protein to the mitochondrion; the sequence is MSVLTSLLLRGLTGSARRLPVPRAK. The Mitochondrial matrix segment spans residues 26–36; sequence VHSMPPEEELG. The chain crosses the membrane as a helical span at residues 37 to 60; that stretch reads IMEKAIGLTFCFVSLFLPAGWILS. Over 61–69 the chain is Mitochondrial intermembrane; sequence HLEDYKRPE.

This sequence belongs to the cytochrome c oxidase VIII family. Component of the cytochrome c oxidase (complex IV, CIV), a multisubunit enzyme composed of 14 subunits. The complex is composed of a catalytic core of 3 subunits MT-CO1, MT-CO2 and MT-CO3, encoded in the mitochondrial DNA, and 11 supernumerary subunits COX4I, COX5A, COX5B, COX6A, COX6B, COX6C, COX7A, COX7B, COX7C, COX8 and NDUFA4, which are encoded in the nuclear genome. The complex exists as a monomer or a dimer and forms supercomplexes (SCs) in the inner mitochondrial membrane with NADH-ubiquinone oxidoreductase (complex I, CI) and ubiquinol-cytochrome c oxidoreductase (cytochrome b-c1 complex, complex III, CIII), resulting in different assemblies (supercomplex SCI(1)III(2)IV(1) and megacomplex MCI(2)III(2)IV(2)). In response to mitochondrial stress, the precursor protein is ubiquitinated by the SIFI complex in the cytoplasm before mitochondrial import, leading to its degradation. Within the SIFI complex, UBR4 initiates ubiquitin chain that are further elongated or branched by KCMF1.

It is found in the mitochondrion inner membrane. Its pathway is energy metabolism; oxidative phosphorylation. In terms of biological role, component of the cytochrome c oxidase, the last enzyme in the mitochondrial electron transport chain which drives oxidative phosphorylation. The respiratory chain contains 3 multisubunit complexes succinate dehydrogenase (complex II, CII), ubiquinol-cytochrome c oxidoreductase (cytochrome b-c1 complex, complex III, CIII) and cytochrome c oxidase (complex IV, CIV), that cooperate to transfer electrons derived from NADH and succinate to molecular oxygen, creating an electrochemical gradient over the inner membrane that drives transmembrane transport and the ATP synthase. Cytochrome c oxidase is the component of the respiratory chain that catalyzes the reduction of oxygen to water. Electrons originating from reduced cytochrome c in the intermembrane space (IMS) are transferred via the dinuclear copper A center (CU(A)) of subunit 2 and heme A of subunit 1 to the active site in subunit 1, a binuclear center (BNC) formed by heme A3 and copper B (CU(B)). The BNC reduces molecular oxygen to 2 water molecules using 4 electrons from cytochrome c in the IMS and 4 protons from the mitochondrial matrix. This is Cytochrome c oxidase subunit 8A, mitochondrial (COX8A) from Macaca fascicularis (Crab-eating macaque).